The chain runs to 350 residues: MCRNNNNKLNLRDLNQSEIQHFIKDLGEKPFRADQICRWVFAQGVSSFDEMTNLSKGLRAKLNELTTLSQATILTSQVSAKGDTIKFLFGLPDGHAVESVLMKHTYGNSVCVSTQVGCRMGCLFCASTINGLVRNLSPGEIYDQVLGIQRETGERVSHIVIMGAGEPLDNFDNVLKFLENIHAEYGLNIGYRHITLSTCGLVPRMQELALRKLPITLAVSLHAPNDDLRDKLVPINRRYKIHQLIEACSNYIEITGRRITFEYALLSGINDSDEHVRQLAALLKNLLCHINLIPVNPVEEKEFIRTPPEKVERFRQYLEKVGLNVTVRRELGGDIDAACGQLRRRYESKN.

The active-site Proton acceptor is glutamate 98. The Radical SAM core domain maps to 104-334 (HTYGNSVCVS…VTVRRELGGD (231 aa)). An intrachain disulfide couples cysteine 111 to cysteine 339. [4Fe-4S] cluster contacts are provided by cysteine 118, cysteine 122, and cysteine 125. S-adenosyl-L-methionine-binding positions include 165 to 166 (GE), serine 197, 220 to 222 (SLH), and asparagine 296. Cysteine 339 functions as the S-methylcysteine intermediate in the catalytic mechanism.

Belongs to the radical SAM superfamily. RlmN family. Requires [4Fe-4S] cluster as cofactor.

It localises to the cytoplasm. It carries out the reaction adenosine(2503) in 23S rRNA + 2 reduced [2Fe-2S]-[ferredoxin] + 2 S-adenosyl-L-methionine = 2-methyladenosine(2503) in 23S rRNA + 5'-deoxyadenosine + L-methionine + 2 oxidized [2Fe-2S]-[ferredoxin] + S-adenosyl-L-homocysteine. It catalyses the reaction adenosine(37) in tRNA + 2 reduced [2Fe-2S]-[ferredoxin] + 2 S-adenosyl-L-methionine = 2-methyladenosine(37) in tRNA + 5'-deoxyadenosine + L-methionine + 2 oxidized [2Fe-2S]-[ferredoxin] + S-adenosyl-L-homocysteine. Functionally, specifically methylates position 2 of adenine 2503 in 23S rRNA and position 2 of adenine 37 in tRNAs. This is Probable dual-specificity RNA methyltransferase RlmN from Desulforamulus reducens (strain ATCC BAA-1160 / DSM 100696 / MI-1) (Desulfotomaculum reducens).